Here is a 629-residue protein sequence, read N- to C-terminus: Dihydroxy-acid dehydratase 2 (629 aa).

D82 lines the Mg(2+) pocket. C123 lines the [2Fe-2S] cluster pocket. Positions 124 and 125 each coordinate Mg(2+). K125 bears the N6-carboxylysine mark. C197 is a binding site for [2Fe-2S] cluster. A Mg(2+)-binding site is contributed by E493. S519 (proton acceptor) is an active-site residue. Residues D603–G629 form a disordered region.

This sequence belongs to the IlvD/Edd family. In terms of assembly, homodimer. It depends on [2Fe-2S] cluster as a cofactor. Requires Mg(2+) as cofactor.

The catalysed reaction is (2R)-2,3-dihydroxy-3-methylbutanoate = 3-methyl-2-oxobutanoate + H2O. The enzyme catalyses (2R,3R)-2,3-dihydroxy-3-methylpentanoate = (S)-3-methyl-2-oxopentanoate + H2O. It functions in the pathway amino-acid biosynthesis; L-isoleucine biosynthesis; L-isoleucine from 2-oxobutanoate: step 3/4. The protein operates within amino-acid biosynthesis; L-valine biosynthesis; L-valine from pyruvate: step 3/4. Its function is as follows. Functions in the biosynthesis of branched-chain amino acids. Catalyzes the dehydration of (2R,3R)-2,3-dihydroxy-3-methylpentanoate (2,3-dihydroxy-3-methylvalerate) into 2-oxo-3-methylpentanoate (2-oxo-3-methylvalerate) and of (2R)-2,3-dihydroxy-3-methylbutanoate (2,3-dihydroxyisovalerate) into 2-oxo-3-methylbutanoate (2-oxoisovalerate), the penultimate precursor to L-isoleucine and L-valine, respectively. The chain is Dihydroxy-acid dehydratase 2 from Nocardia farcinica (strain IFM 10152).